The following is a 250-amino-acid chain: 3-deoxy-manno-octulosonate cytidylyltransferase (250 aa).

It belongs to the KdsB family.

It localises to the cytoplasm. It catalyses the reaction 3-deoxy-alpha-D-manno-oct-2-ulosonate + CTP = CMP-3-deoxy-beta-D-manno-octulosonate + diphosphate. The protein operates within nucleotide-sugar biosynthesis; CMP-3-deoxy-D-manno-octulosonate biosynthesis; CMP-3-deoxy-D-manno-octulosonate from 3-deoxy-D-manno-octulosonate and CTP: step 1/1. It participates in bacterial outer membrane biogenesis; lipopolysaccharide biosynthesis. Its function is as follows. Activates KDO (a required 8-carbon sugar) for incorporation into bacterial lipopolysaccharide in Gram-negative bacteria. In Syntrophotalea carbinolica (strain DSM 2380 / NBRC 103641 / GraBd1) (Pelobacter carbinolicus), this protein is 3-deoxy-manno-octulosonate cytidylyltransferase.